Reading from the N-terminus, the 67-residue chain is Small ribosomal subunit protein bS21 (67 aa).

The protein belongs to the bacterial ribosomal protein bS21 family.

The sequence is that of Small ribosomal subunit protein bS21 from Magnetococcus marinus (strain ATCC BAA-1437 / JCM 17883 / MC-1).